Consider the following 227-residue polypeptide: Cytochrome c oxidase subunit 2 (227 aa).

The Mitochondrial intermembrane portion of the chain corresponds to 1-14; it reads MAYPLQLGFQDATS. Residues 15–45 form a helical membrane-spanning segment; the sequence is PVMEELLHFHDHTLMIIFLISSLVLYIIMLM. The Mitochondrial matrix segment spans residues 46-59; sequence LTTKLIHTNMMNVQ. Residues 60-87 traverse the membrane as a helical segment; sequence EMEMIWTILPAIILILIALPSLHTLYMM. Residues 88 to 227 lie on the Mitochondrial intermembrane side of the membrane; that stretch reads DEINNPLLTI…YFESWSASLA (140 aa). His-161, Cys-196, Glu-198, Cys-200, His-204, and Met-207 together coordinate Cu cation. Glu-198 is a Mg(2+) binding site. Tyr-218 is subject to Phosphotyrosine.

This sequence belongs to the cytochrome c oxidase subunit 2 family. Component of the cytochrome c oxidase (complex IV, CIV), a multisubunit enzyme composed of 14 subunits. The complex is composed of a catalytic core of 3 subunits MT-CO1, MT-CO2 and MT-CO3, encoded in the mitochondrial DNA, and 11 supernumerary subunits COX4I, COX5A, COX5B, COX6A, COX6B, COX6C, COX7A, COX7B, COX7C, COX8 and NDUFA4, which are encoded in the nuclear genome. The complex exists as a monomer or a dimer and forms supercomplexes (SCs) in the inner mitochondrial membrane with NADH-ubiquinone oxidoreductase (complex I, CI) and ubiquinol-cytochrome c oxidoreductase (cytochrome b-c1 complex, complex III, CIII), resulting in different assemblies (supercomplex SCI(1)III(2)IV(1) and megacomplex MCI(2)III(2)IV(2)). Found in a complex with TMEM177, COA6, COX18, COX20, SCO1 and SCO2. Interacts with TMEM177 in a COX20-dependent manner. Interacts with COX20. Interacts with COX16. Requires Cu cation as cofactor.

The protein localises to the mitochondrion inner membrane. It catalyses the reaction 4 Fe(II)-[cytochrome c] + O2 + 8 H(+)(in) = 4 Fe(III)-[cytochrome c] + 2 H2O + 4 H(+)(out). Functionally, component of the cytochrome c oxidase, the last enzyme in the mitochondrial electron transport chain which drives oxidative phosphorylation. The respiratory chain contains 3 multisubunit complexes succinate dehydrogenase (complex II, CII), ubiquinol-cytochrome c oxidoreductase (cytochrome b-c1 complex, complex III, CIII) and cytochrome c oxidase (complex IV, CIV), that cooperate to transfer electrons derived from NADH and succinate to molecular oxygen, creating an electrochemical gradient over the inner membrane that drives transmembrane transport and the ATP synthase. Cytochrome c oxidase is the component of the respiratory chain that catalyzes the reduction of oxygen to water. Electrons originating from reduced cytochrome c in the intermembrane space (IMS) are transferred via the dinuclear copper A center (CU(A)) of subunit 2 and heme A of subunit 1 to the active site in subunit 1, a binuclear center (BNC) formed by heme A3 and copper B (CU(B)). The BNC reduces molecular oxygen to 2 water molecules using 4 electrons from cytochrome c in the IMS and 4 protons from the mitochondrial matrix. This Elephas maximus (Indian elephant) protein is Cytochrome c oxidase subunit 2 (MT-CO2).